The primary structure comprises 317 residues: MKQFNKPEFGIVKESPNKFYGKFEAAPLERGFAVTLGNALRRTLLSSTPGASVFAIKIAGAQHEFTSISGIEENVTRIVLNVKKLILRIDSAIYNDDETVELKVGTSTIGPVTAGSLVLPAGVEVLNKDLVIANVAEGGNLDLVLYAKNSRGYKTFKENKELKDVVPGMITIDSNYSPIIKVAYGSTPINLGKAQDFEKLILEVETDGSILASDAVSLASKILISHFDVFTTLAEEVEEVAIMGVETVEEKELDKPVEELEFTQRSLNCLKRAGISTLRELVSKTEDEIQDIRNLGRKSLKEIKDKVAALELTFKQN.

The alpha N-terminal domain (alpha-NTD) stretch occupies residues 1–234; sequence MKQFNKPEFG…SHFDVFTTLA (234 aa). The segment at 249–317 is alpha C-terminal domain (alpha-CTD); it reads EEKELDKPVE…AALELTFKQN (69 aa).

Belongs to the RNA polymerase alpha chain family. Homodimer. The RNAP catalytic core consists of 2 alpha, 1 beta, 1 beta' and 1 omega subunit. When a sigma factor is associated with the core the holoenzyme is formed, which can initiate transcription.

The enzyme catalyses RNA(n) + a ribonucleoside 5'-triphosphate = RNA(n+1) + diphosphate. DNA-dependent RNA polymerase catalyzes the transcription of DNA into RNA using the four ribonucleoside triphosphates as substrates. The chain is DNA-directed RNA polymerase subunit alpha from Mesoplasma florum (strain ATCC 33453 / NBRC 100688 / NCTC 11704 / L1) (Acholeplasma florum).